The following is a 394-amino-acid chain: NAD(P)H-quinone oxidoreductase subunit H (394 aa).

It belongs to the complex I 49 kDa subunit family. NDH-1 can be composed of about 15 different subunits; different subcomplexes with different compositions have been identified which probably have different functions.

Its subcellular location is the cellular thylakoid membrane. The enzyme catalyses a plastoquinone + NADH + (n+1) H(+)(in) = a plastoquinol + NAD(+) + n H(+)(out). The catalysed reaction is a plastoquinone + NADPH + (n+1) H(+)(in) = a plastoquinol + NADP(+) + n H(+)(out). In terms of biological role, NDH-1 shuttles electrons from an unknown electron donor, via FMN and iron-sulfur (Fe-S) centers, to quinones in the respiratory and/or the photosynthetic chain. The immediate electron acceptor for the enzyme in this species is believed to be plastoquinone. Couples the redox reaction to proton translocation, and thus conserves the redox energy in a proton gradient. Cyanobacterial NDH-1 also plays a role in inorganic carbon-concentration. The chain is NAD(P)H-quinone oxidoreductase subunit H from Nostoc punctiforme (strain ATCC 29133 / PCC 73102).